Here is an 86-residue protein sequence, read N- to C-terminus: MATKKAGGSSRNGRDSAGRRLGIKKSDGQYVIPGNIIVRQRGTKVHPGINVGLGKDHTIFSLIEGRVEFLTKQNHKIVNVKEIANV.

Residues 1–26 (MATKKAGGSSRNGRDSAGRRLGIKKS) are disordered.

The protein belongs to the bacterial ribosomal protein bL27 family.

This Rickettsia typhi (strain ATCC VR-144 / Wilmington) protein is Large ribosomal subunit protein bL27.